The primary structure comprises 269 residues: MGILSVDLLITLQILPVFFSNCLFLALYDSVILLKHVVLLLSRSKSTRGQWRRMLTSEGMRCIWKSFLLDAYKQVKLGEDAPNSSVVHVSSPEGGDTSGNGAQEKTVDGTECHLLDFASPERPLVVNFGSATUPPFTNQLPAFSKLVEEFSSVADFLLVYIDEAHPSDGWAVPGDSSLFFEVKKHRNQEDRCAAAHQLLERFSLPPQCRVVADRMDNNANVAYGVAFERVCIVQRQKIAYLGGKGPFFYNLQEVRRWLEKNFSKRUKLD.

Over 1–9 (MGILSVDLL) the chain is Lumenal. The helical; Signal-anchor for type III membrane protein transmembrane segment at 10-34 (ITLQILPVFFSNCLFLALYDSVILL) threads the bilayer. At 35–269 (KHVVLLLSRS…KNFSKRUKLD (235 aa)) the chain is on the cytoplasmic side. The segment at 83-103 (NSSVVHVSSPEGGDTSGNGAQ) is disordered. U133 is an active-site residue. 2 non-standard amino acids (selenocysteine) are found at residues U133 and U266.

Belongs to the iodothyronine deiodinase family. In terms of assembly, predominantly monomer. Can form homodimers but homodimerization is not essential for enzyme activity. Interacts with USP20 and USP33. Interacts with MARCHF6. Ubiquitinated by MARCHF6, leading to its degradation by the proteasome. Deubiquitinated by USP20 and USP33. Highly expressed in thyroid, mammary and pituitary glands, then in hypothalamus. Low levels detected in diaphragm, heart, kidney and lung.

It localises to the endoplasmic reticulum membrane. It catalyses the reaction 3,3',5-triiodo-L-thyronine + iodide + A + H(+) = L-thyroxine + AH2. It carries out the reaction 3,3'-diiodo-L-thyronine + iodide + A + H(+) = 3,3',5'-triiodo-L-thyronine + AH2. The catalysed reaction is 3'-iodo-L-thyronine + iodide + A + H(+) = 3',5'-diiodo-L-thyronine + AH2. The enzyme catalyses 3,3'-diiodothyronamine + iodide + A + H(+) = 3,3',5'-triiodothyronamine + AH2. It catalyses the reaction 3'-iodothyronamine + iodide + A + H(+) = 3',5'-diiodothyronamine + AH2. Its function is as follows. Plays a crucial role in the metabolism of thyroid hormones (TH) and has specific roles in TH activation and inactivation by deiodination. Catalyzes the deiodination of L-thyroxine (T4) to 3,5,3'-triiodothyronine (T3), 3,3',5'-triiodothyronine (rT3) to 3,3'-diiodothyronine (3,3'-T2) and 3',5'-diiodothyronine (3',5'-T2) to 3'-monoiodothyronine (3'-T1) via outer-ring deiodination (ORD). Catalyzes the phenolic ring deiodinations of 3,3',5'-triiodothyronamine and 3',5'- diiodothyronamine. This chain is Type II iodothyronine deiodinase (DIO2), found in Bos taurus (Bovine).